The sequence spans 56 residues: Small ribosomal subunit protein uS14z/uS14y/uS14x (56 aa).

Residues Cys-21, Cys-24, Cys-39, and Cys-42 each coordinate Zn(2+).

The protein belongs to the universal ribosomal protein uS14 family. Zn(2+) is required as a cofactor.

The chain is Small ribosomal subunit protein uS14z/uS14y/uS14x (RPS29A) from Arabidopsis thaliana (Mouse-ear cress).